A 383-amino-acid polypeptide reads, in one-letter code: Anhydro-N-acetylmuramic acid kinase (383 aa).

9-16 is a binding site for ATP; the sequence is GTSVDSID.

Belongs to the anhydro-N-acetylmuramic acid kinase family.

The enzyme catalyses 1,6-anhydro-N-acetyl-beta-muramate + ATP + H2O = N-acetyl-D-muramate 6-phosphate + ADP + H(+). Its pathway is amino-sugar metabolism; 1,6-anhydro-N-acetylmuramate degradation. The protein operates within cell wall biogenesis; peptidoglycan recycling. Its function is as follows. Catalyzes the specific phosphorylation of 1,6-anhydro-N-acetylmuramic acid (anhMurNAc) with the simultaneous cleavage of the 1,6-anhydro ring, generating MurNAc-6-P. Is required for the utilization of anhMurNAc either imported from the medium or derived from its own cell wall murein, and thus plays a role in cell wall recycling. The protein is Anhydro-N-acetylmuramic acid kinase of Crocosphaera subtropica (strain ATCC 51142 / BH68) (Cyanothece sp. (strain ATCC 51142)).